The sequence spans 473 residues: H(+)/Cl(-) exchange transporter ClcA (473 aa).

The Cytoplasmic segment spans residues 1–32 (MKTDTPSLETPQAARLRRRQLIRQLLERDKTP). Residues 33-69 (LAILFMAAVVGTLVGLAAVAFDKGVAWLQNQRMGALV) traverse the membrane as a helical segment. Residues 70-76 (HTADNYP) lie on the Periplasmic side of the membrane. A helical membrane pass occupies residues 77–100 (LLLTVAFLCSAVLAMFGYFLVRKY). The short motif at 106-110 (GSGIP) is the Selectivity filter part_1 element. Serine 107 provides a ligand contact to chloride. Residues 109–116 (IPEIEGAL) constitute an intramembrane region (helical). Topologically, residues 117–123 (EDQRPVR) are cytoplasmic. The next 2 membrane-spanning stretches (helical) occupy residues 124–141 (WWRV…TLGG) and 148–166 (EGPT…LDIF). Positions 146-150 (GREGP) match the Selectivity filter part_2 motif. The Cytoplasmic portion of the chain corresponds to 167-176 (RLKGDEARHT). Intramembrane regions (helical) lie at residues 177 to 189 (LLAT…LAAA) and 193 to 201 (PLAGILFII). Over 202-214 (EEMRPQFRYTLIS) the chain is Cytoplasmic. Residues 215–232 (IKAVFIGVIMSTIMYRIF) traverse the membrane as a helical segment. The Periplasmic segment spans residues 233 to 252 (NHEVALIDVGKLSDAPLNTL). The helical transmembrane segment at 253-281 (WLYLILGIIFGIFGPIFNKWVLGMQDLLH) threads the bilayer. Topologically, residues 282 to 287 (RVHGGN) are cytoplasmic. Residues 288–309 (ITKWILMGGAIGGLCGLLGFVA) traverse the membrane as a helical segment. At 310–329 (PATSGGGFNLIPIATAGNFS) the chain is on the periplasmic side. 2 helical membrane passes run 330 to 349 (MGML…LCFS) and 355 to 376 (GIFA…MVAV). The Selectivity filter part_3 motif lies at 355–359 (GIFAP). Residues isoleucine 356 and phenylalanine 357 each contribute to the chloride site. Topologically, residues 377–386 (ELFPQYHLEA) are periplasmic. Residues 387-401 (GTFAIAGMGALLAAS) constitute an intramembrane region (helical). The note=Loop between two helices intramembrane region spans 402–404 (IRA). The segment at residues 405–416 (PLTGIILVLEMT) is an intramembrane region (helical). An intramembrane region (note=Loop between two helices) is located at residues 417-421 (DNYQL). A helical membrane pass occupies residues 422 to 438 (ILPMIITGLGATLLAQF). At 439-473 (TGGKPLYSAILARTLAKQEAEQLARSKAASASENT) the chain is on the cytoplasmic side. Residue tyrosine 445 coordinates chloride.

It belongs to the chloride channel (TC 2.A.49) family. ClcA subfamily. Homodimer.

It localises to the cell inner membrane. It catalyses the reaction 2 chloride(in) + H(+)(out) = 2 chloride(out) + H(+)(in). In terms of biological role, proton-coupled chloride transporter. Functions as antiport system and exchanges two chloride ions for 1 proton. Probably acts as an electrical shunt for an outwardly-directed proton pump that is linked to amino acid decarboxylation, as part of the extreme acid resistance (XAR) response. The chain is H(+)/Cl(-) exchange transporter ClcA from Escherichia coli O9:H4 (strain HS).